The sequence spans 628 residues: Beta-galactosidase large subunit (628 aa).

Glutamate 468 functions as the Proton donor in the catalytic mechanism. The active-site Nucleophile is the glutamate 536.

The protein belongs to the glycosyl hydrolase 2 family. As to quaternary structure, heterodimer of a large (LacL) and a small subunit (LacM).

The enzyme catalyses Hydrolysis of terminal non-reducing beta-D-galactose residues in beta-D-galactosides.. In terms of biological role, component of a beta-galactosidase. This Lactobacillus acidophilus (strain ATCC 700396 / NCK56 / N2 / NCFM) protein is Beta-galactosidase large subunit (lacL).